We begin with the raw amino-acid sequence, 398 residues long: Tear acid lipase-like protein (398 aa).

A signal peptide spans 1–19 (MSWLLSTMCLVHVCGNIFC). Ser170 serves as the catalytic Nucleophile. Cys243 and Cys252 form a disulfide bridge. The N-linked (GlcNAc...) asparagine glycan is linked to Asn268. Active-site charge relay system residues include Asp340 and His369.

It belongs to the AB hydrolase superfamily. Lipase family. As to quaternary structure, monomer. Post-translationally, N-glycosylated. In terms of tissue distribution, expressed in female lacrimal gland acinar cells from where it is secreted into tears (at protein level).

The protein localises to the secreted. In terms of biological role, female-specific protein which lacks detectable lipase activity against a range of substrates. Binds the hydrophobic lipid 1-aminoanthracene with high affinity. The sequence is that of Tear acid lipase-like protein from Mesocricetus auratus (Golden hamster).